Consider the following 477-residue polypeptide: Glycogen synthase (477 aa).

Residue lysine 15 participates in ADP-alpha-D-glucose binding.

It belongs to the glycosyltransferase 1 family. Bacterial/plant glycogen synthase subfamily.

The enzyme catalyses [(1-&gt;4)-alpha-D-glucosyl](n) + ADP-alpha-D-glucose = [(1-&gt;4)-alpha-D-glucosyl](n+1) + ADP + H(+). It functions in the pathway glycan biosynthesis; glycogen biosynthesis. Functionally, synthesizes alpha-1,4-glucan chains using ADP-glucose. This chain is Glycogen synthase, found in Erwinia tasmaniensis (strain DSM 17950 / CFBP 7177 / CIP 109463 / NCPPB 4357 / Et1/99).